Consider the following 189-residue polypeptide: NADH-quinone oxidoreductase subunit B (189 aa).

The [4Fe-4S] cluster site is built by cysteine 39, cysteine 40, cysteine 104, and cysteine 135.

It belongs to the complex I 20 kDa subunit family. In terms of assembly, NDH-1 is composed of 14 different subunits. Subunits NuoB, C, D, E, F, and G constitute the peripheral sector of the complex. Requires [4Fe-4S] cluster as cofactor.

It localises to the cell inner membrane. The catalysed reaction is a quinone + NADH + 5 H(+)(in) = a quinol + NAD(+) + 4 H(+)(out). Functionally, NDH-1 shuttles electrons from NADH, via FMN and iron-sulfur (Fe-S) centers, to quinones in the respiratory chain. The immediate electron acceptor for the enzyme in this species is believed to be a menaquinone. Couples the redox reaction to proton translocation (for every two electrons transferred, four hydrogen ions are translocated across the cytoplasmic membrane), and thus conserves the redox energy in a proton gradient. The sequence is that of NADH-quinone oxidoreductase subunit B from Chlorobium phaeobacteroides (strain DSM 266 / SMG 266 / 2430).